The following is a 197-amino-acid chain: ATP-dependent Clp protease proteolytic subunit (197 aa).

The active-site Nucleophile is the S98. H123 is an active-site residue.

This sequence belongs to the peptidase S14 family. Fourteen ClpP subunits assemble into 2 heptameric rings which stack back to back to give a disk-like structure with a central cavity, resembling the structure of eukaryotic proteasomes.

It localises to the cytoplasm. It carries out the reaction Hydrolysis of proteins to small peptides in the presence of ATP and magnesium. alpha-casein is the usual test substrate. In the absence of ATP, only oligopeptides shorter than five residues are hydrolyzed (such as succinyl-Leu-Tyr-|-NHMec, and Leu-Tyr-Leu-|-Tyr-Trp, in which cleavage of the -Tyr-|-Leu- and -Tyr-|-Trp bonds also occurs).. Its function is as follows. Cleaves peptides in various proteins in a process that requires ATP hydrolysis. Has a chymotrypsin-like activity. Plays a major role in the degradation of misfolded proteins. This chain is ATP-dependent Clp protease proteolytic subunit, found in Haemophilus ducreyi (strain 35000HP / ATCC 700724).